A 424-amino-acid polypeptide reads, in one-letter code: G1/S-specific cyclin-E (424 aa).

The disordered stretch occupies residues 1–25; the sequence is MSRRSGRLQSRQDNQPLTECISDEN. A compositionally biased stretch (polar residues) spans 7-17; that stretch reads RLQSRQDNQPL. T411 is subject to Phosphothreonine.

The protein belongs to the cyclin family. Cyclin E subfamily. Interacts with a member of the CDK2/CDK protein kinases to form a serine/threonine kinase holoenzyme complex. The cyclin subunit imparts substrate specificity to the complex.

The protein localises to the nucleus. In terms of biological role, essential for the control of the cell cycle at the G1/S (start) transition. The polypeptide is G1/S-specific cyclin-E (CYCE) (Hemicentrotus pulcherrimus (Sea urchin)).